The chain runs to 289 residues: MGVGMQDIKRRIKSVNSTKQITKAMELVSSAKLRKARLKLEKTRPYFKVVEETINDIVSSTQGIRHDLITPREVKKTAYIVITADRGLSGGYNANVIKAAVNHLQEKERVSIIAIGKKGRGFFRKRGYDLDGEFTKISENPSFSDAQGIGKLGMELYKQELVDELYLVYTEFVSTITHKPRVVKLLPLEPQTGGEGAEKPKERDEFMSYEPSPEEVLDYLIPKYIESMLYGALVESSTSQQGATRVAMESATDNATDMIDGLQLQYNRARQASITQEIAEIVSGAEALK.

It belongs to the ATPase gamma chain family. As to quaternary structure, F-type ATPases have 2 components, CF(1) - the catalytic core - and CF(0) - the membrane proton channel. CF(1) has five subunits: alpha(3), beta(3), gamma(1), delta(1), epsilon(1). CF(0) has three main subunits: a, b and c.

The protein resides in the cell membrane. Produces ATP from ADP in the presence of a proton gradient across the membrane. The gamma chain is believed to be important in regulating ATPase activity and the flow of protons through the CF(0) complex. The polypeptide is ATP synthase gamma chain (Alkaliphilus metalliredigens (strain QYMF)).